The chain runs to 251 residues: Imidazole glycerol phosphate synthase subunit HisF (251 aa).

Residues aspartate 11 and aspartate 130 contribute to the active site.

This sequence belongs to the HisA/HisF family. Heterodimer of HisH and HisF.

The protein localises to the cytoplasm. The enzyme catalyses 5-[(5-phospho-1-deoxy-D-ribulos-1-ylimino)methylamino]-1-(5-phospho-beta-D-ribosyl)imidazole-4-carboxamide + L-glutamine = D-erythro-1-(imidazol-4-yl)glycerol 3-phosphate + 5-amino-1-(5-phospho-beta-D-ribosyl)imidazole-4-carboxamide + L-glutamate + H(+). The protein operates within amino-acid biosynthesis; L-histidine biosynthesis; L-histidine from 5-phospho-alpha-D-ribose 1-diphosphate: step 5/9. IGPS catalyzes the conversion of PRFAR and glutamine to IGP, AICAR and glutamate. The HisF subunit catalyzes the cyclization activity that produces IGP and AICAR from PRFAR using the ammonia provided by the HisH subunit. This chain is Imidazole glycerol phosphate synthase subunit HisF, found in Phocaeicola vulgatus (strain ATCC 8482 / DSM 1447 / JCM 5826 / CCUG 4940 / NBRC 14291 / NCTC 11154) (Bacteroides vulgatus).